A 1349-amino-acid polypeptide reads, in one-letter code: ABC multidrug transporter G (1349 aa).

The region spanning 51-299 (RQFLGFLKGS…FEDMGFVCPK (249 aa)) is the ABC transporter 1 domain. N-linked (GlcNAc...) asparagine glycosylation is present at asparagine 144. 4 helical membrane passes run 407 to 427 (LSLI…GSLF), 436 to 456 (SIFL…LESM), 492 to 512 (IPVV…MAAL), and 523 to 543 (WIIV…VGAL). Residue asparagine 549 is glycosylated (N-linked (GlcNAc...) asparagine). 2 helical membrane passes run 550–570 (ASKI…YLIP) and 580–600 (WIFY…NEFV). A glycan (N-linked (GlcNAc...) asparagine) is linked at asparagine 649. A helical membrane pass occupies residues 659 to 679 (FGVIIGFWVFFIVLTALGLEL). The ABC transporter 2 domain maps to 721 to 963 (FTWHDLDYHV…VLDYFARHGA (243 aa)). Position 757 to 764 (757 to 764 (GCSGAGKT)) interacts with ATP. Asparagine 994 carries N-linked (GlcNAc...) asparagine glycosylation. 6 helical membrane passes run 1056-1076 (VILH…IGDG), 1085-1105 (FAIF…QPFF), 1121-1143 (IYHW…ILCA), 1166-1186 (MYLQ…GIAA), 1193-1213 (FAAV…CGVV), and 1226-1246 (WLYY…EVLW). N-linked (GlcNAc...) asparagine glycosylation occurs at asparagine 1287. A helical membrane pass occupies residues 1318-1338 (TGITALFCVSSYAMVFLMMKL).

It belongs to the ABC transporter superfamily. ABCG family. PDR (TC 3.A.1.205) subfamily.

It localises to the cell membrane. In terms of biological role, ABC efflux transporter that seems not to be able to transport azoles, nor rhodamine 6G (R-6G), a known substrate for many ABC transporters. The polypeptide is ABC multidrug transporter G (Aspergillus fumigatus (strain ATCC MYA-4609 / CBS 101355 / FGSC A1100 / Af293) (Neosartorya fumigata)).